The sequence spans 375 residues: Protein RecA (375 aa).

ATP is bound at residue 75–82 (GPESSGKT). Positions 339-375 (GPYAKMKDEQTEEAAGDQMDEDKPIDLSPNFDDDDAN) are disordered. Over residues 348 to 358 (QTEEAAGDQMD) the composition is skewed to acidic residues.

The protein belongs to the RecA family.

Its subcellular location is the cytoplasm. Can catalyze the hydrolysis of ATP in the presence of single-stranded DNA, the ATP-dependent uptake of single-stranded DNA by duplex DNA, and the ATP-dependent hybridization of homologous single-stranded DNAs. It interacts with LexA causing its activation and leading to its autocatalytic cleavage. In Corynebacterium jeikeium (strain K411), this protein is Protein RecA.